Reading from the N-terminus, the 319-residue chain is MNATLTSLFNIFGILGTLLTLAALLIWIERRLLGFWQERYGPNRVGPFGILQVVADAIKLLTKEDWVPPFADKLVFILAPTVVVIATLLAFAVIPFTPYIGIIDLNIGLLFFLAMSSLSVYSVVLGGWASNNKYSLMGALRAAAQMLSYEVFMGLSLMGVVMLAGTFNLREIVAAQQDMWFCIPQFLGLVVFLIAGIAEAHRLPFDLPEAETELIAGFHTEYSGMKFGLFFVGEYLAILLISALIVTLFFGGWQGPWLPPLVWFFIKFSFFVLFFILLRAALPRPRYDQLMAYGWKLMLPLALLNLVITGAVVLALDGT.

Helical transmembrane passes span 8-28 (LFNI…LIWI), 74-94 (LVFI…FAVI), 107-127 (IGLL…VLGG), 147-167 (LSYE…AGTF), 179-199 (MWFC…GIAE), 230-250 (FFVG…TLFF), 258-278 (LPPL…FILL), and 297-317 (LMLP…LALD).

This sequence belongs to the complex I subunit 1 family. In terms of assembly, NDH-1 is composed of 14 different subunits. Subunits NuoA, H, J, K, L, M, N constitute the membrane sector of the complex.

The protein resides in the cell inner membrane. It carries out the reaction a quinone + NADH + 5 H(+)(in) = a quinol + NAD(+) + 4 H(+)(out). Functionally, NDH-1 shuttles electrons from NADH, via FMN and iron-sulfur (Fe-S) centers, to quinones in the respiratory chain. The immediate electron acceptor for the enzyme in this species is believed to be ubiquinone. Couples the redox reaction to proton translocation (for every two electrons transferred, four hydrogen ions are translocated across the cytoplasmic membrane), and thus conserves the redox energy in a proton gradient. This subunit may bind ubiquinone. The chain is NADH-quinone oxidoreductase subunit H 1 from Nitrosococcus oceani (strain ATCC 19707 / BCRC 17464 / JCM 30415 / NCIMB 11848 / C-107).